The chain runs to 412 residues: MAFWCQRDSYAREFTTTVVSCCPAELQTEGSNGKKEVLSGFQVVLEDTVLFPEGGGQPDDRGTINDISVLRVTRRGEQADHFTQTPLDPGSQVLVRVDWERRFDHMQQHSGQHLITAVADHLFKLKTTSWELGRFRSAIELDTPSMTAEQVAAIEQSVNEKIRDRLPVNVRELSLDDPEVEQVSGRGLPDDHAGPIRVVNIEGVDSNMCCGTHVSNLSDLQVIKILGTEKGKKNRTNLIFLSGNRVLKWMERSHGTEKALTALLKCGAEDHVEAVKKLQNSTKILQKNNLNLLRDLAVHIAHSLRNSPDWGGVVILHRKEGDSEFMNIIANEIGSEETLLFLTVGDEKGGGLFLLAGPPASVETLGPRVAEVLEGKGAGKKGRFQGKATKMSRRMEAQALLQDYISTQSAKE.

2 residues coordinate Zn(2+): H109 and H113. The residue at position 174 (S174) is a Phosphoserine. Positions 209 and 213 each coordinate Zn(2+).

It belongs to the class-II aminoacyl-tRNA synthetase family. Alax-L subfamily. The cofactor is Zn(2+).

It is found in the cytoplasm. Functions in trans to edit the amino acid moiety from incorrectly charged tRNA(Ala). The sequence is that of Alanyl-tRNA editing protein Aarsd1 (AARSD1) from Homo sapiens (Human).